A 570-amino-acid polypeptide reads, in one-letter code: Probable glucomannan 4-beta-mannosyltransferase 11 (570 aa).

A helical transmembrane segment spans residues 57–77 (LAMTVMILAEKLFVAAVCLAV). The active site involves Asp157. Substrate contacts are provided by Asp216 and Asp218. The active site involves Asp310. Transmembrane regions (helical) follow at residues 389-409 (IAAH…SVWL), 412-432 (IEIP…CKAV), 522-542 (YSEI…VLYA), and 548-568 (IFLF…IGVC).

This sequence belongs to the glycosyltransferase 2 family. Plant cellulose synthase-like A subfamily.

The protein resides in the golgi apparatus membrane. The catalysed reaction is GDP-mannose + (glucomannan)n = GDP + (glucomannan)n+1.. Functionally, probable mannan synthase which consists of a 4-beta-mannosyltransferase activity on mannan using GDP-mannose. The beta-1,4-mannan product is the backbone for galactomannan synthesis by galactomannan galactosyltransferase. Galactomannan is a noncellulosic polysaccharides of plant cell wall. This Oryza sativa subsp. japonica (Rice) protein is Probable glucomannan 4-beta-mannosyltransferase 11.